Consider the following 438-residue polypeptide: MSTTTTPYVAFKVKDISLAAWGRKEIELAEAEMPGLMALRAEYKDEQPLKGARIAGCLHMTIQTAVLIETLIALGAEVTWSSCNIFSTQDQAAAAIAAAGISVYAWKGLDEESFDWCIEQTLFFGEERKPLNMILDDGGDLTNMVIDRYPELVAGIKGLSEETTTGVHRLYERVKAGTLPMPAININDSVTKSKFDNKYGCKESAVDAVRRATDLMLAGKRVVVCGYGDVGKGTAASFRGAGSIVTVTEIDPICALQAAMDGYEVKKLNTVIANADIIITTTGNKDIVLGEHFEQMKDKTVVCNIGHFDNEIDMAWLNKNHGASKIEIKPQVDKYNINGKDIIILAEGRLVNLGCATGHPSFVMSNSFTNQTLAQIELWNNSAAYKNEVYMLPKHLDEKVAALHLAKLGVELEVLREDQAAYIGVEVQGPFKPEYYRY.

Positions 61, 137, and 162 each coordinate substrate. Thr163 to Thr165 provides a ligand contact to NAD(+). Residues Lys192 and Asp196 each contribute to the substrate site. NAD(+)-binding positions include Asn197, Gly226–Gly231, Glu249, Asn284, Ile305–His307, and Asn352.

It belongs to the adenosylhomocysteinase family. It depends on NAD(+) as a cofactor.

It localises to the cytoplasm. It catalyses the reaction S-adenosyl-L-homocysteine + H2O = L-homocysteine + adenosine. The protein operates within amino-acid biosynthesis; L-homocysteine biosynthesis; L-homocysteine from S-adenosyl-L-homocysteine: step 1/1. May play a key role in the regulation of the intracellular concentration of adenosylhomocysteine. The polypeptide is Adenosylhomocysteinase (Flavobacterium johnsoniae (strain ATCC 17061 / DSM 2064 / JCM 8514 / BCRC 14874 / CCUG 350202 / NBRC 14942 / NCIMB 11054 / UW101) (Cytophaga johnsonae)).